Reading from the N-terminus, the 451-residue chain is MEDSLKQLSLGRDPEGAGDSQALAELQELALKWFMETQAPFILQNGALPPWFHGFITRKQTEQLLRDKALGSFLIRLSDRATGYILSYRGSDRCRHFVINQLRNRRYIISGDTQSHSTLAELVHHYQEAQLEPFKEMLTAACPRPEDNDLYDAITRGLHQTIVDPENPPATAFLTVVPDKAASPRSSPKPQVSFLHAQKSLDVSPRNLSQEESMEAPIRVSPLPEKSSSLLEESFGGPSDIIYADLRRMNQARLGLGTEGSGRHGPVPAGSQAYSPGREAQRRLSDGEQNRPDGLGPVLSGVSPDQGPTESPTSWGCSDAMGSLGATWRQEFPKLSQEAQPCSQGSSADIYEFIGTEGLLQEARDTPDQEGSTYEQIPACWGGPARAPHPGASPTYSPWVHGYKRISGTPELSEPGNTYEQIPATKSKETGRTHKPDKLRRLFFTYRKHKF.

The SH2 domain occupies 51-142 (WFHGFITRKQ…PFKEMLTAAC (92 aa)). Disordered regions lie at residues 180–232 (KAAS…SLLE), 256–321 (LGTE…SDAM), and 408–436 (GTPE…THKP). A compositionally biased stretch (low complexity) spans 221 to 232 (SPLPEKSSSLLE). The span at 279 to 291 (EAQRRLSDGEQNR) shows a compositional bias: basic and acidic residues. A compositionally biased stretch (polar residues) spans 306–316 (QGPTESPTSWG). The segment covering 426–436 (KSKETGRTHKP) has biased composition (basic and acidic residues).

The protein is SH2 domain-containing protein 7 (SH2D7) of Homo sapiens (Human).